The primary structure comprises 630 residues: MLIENTNDRFGIVIDAGSSGSRIHVFKWQDTESLLHATNQDSQSILQSVPHIHQEKDWTFKLNPGLSSFEKKPQDAYKSHIKPLLDFAKNIIPESHWSSCPVFIQATAGMRLLPQDIQSSILDGLCQGLKHPAEFLVEDCSAQIQVIDGETEGLYGWLGLNYLYGHFNDYNPEVSDHFTFGFMDMGGASTQIAFAPHDSGEIARHRDDIATIFLRSVNGDLQKWDVFVSTWLGFGANQARRRYLAQLINTLPENTNDYENDDFSTRNLNDPCMPRGSSTDFEFKDTIFHIAGSGNYEQCTKSIYPLLLKNMPCDDEPCLFNGVHAPRIDFANDKFIGTSEYWYTANDVFKLGGEYNFDKFSKSLREFCNSNWTQILANSDKGVYNSIPENFLKDACFKGNWVLNILHEGFDMPRIDVDAENVNDRPLFQSVEKVEERELSWTLGRILLYASGSILAGNDDFMVGIAPSERRTKLTGKKFIPGKLLESDQLRKQSSSLSNKGFLMWFAIICCIFYLIFHRSHIIRRRFSGLYNITKDFKTGIRRRLKFLRRSDPFSRLEEGELGTDVDGFKDVYRMKSSSMFDLGKSSATMQREHEPQRTASQSANLAPSNLRPAFSMADFSKFKDSRLYD.

Residues 1 to 500 (MLIENTNDRF…RKQSSSLSNK (500 aa)) are Lumenal-facing. E152 functions as the Proton acceptor in the catalytic mechanism. Residues 501 to 517 (GFLMWFAIICCIFYLIF) form a helical membrane-spanning segment. At 518–630 (HRSHIIRRRF…SKFKDSRLYD (113 aa)) the chain is on the cytoplasmic side. The tract at residues 586 to 606 (SSATMQREHEPQRTASQSANL) is disordered.

It belongs to the GDA1/CD39 NTPase family. As to quaternary structure, interacts with activator subunit VMA13 of vacuolar H(+)-ATPase. Interacts with CDC55; this interaction is disrupted by adenovirus E4orf4, which remains associated with both YND1 and CDC55. The cofactor is Ca(2+). Requires Mg(2+) as cofactor. Mn(2+) is required as a cofactor.

It is found in the golgi apparatus. The protein localises to the membrane. The enzyme catalyses a ribonucleoside 5'-triphosphate + 2 H2O = a ribonucleoside 5'-phosphate + 2 phosphate + 2 H(+). It participates in protein modification; protein glycosylation. Activity is inhibited both by interaction with VMA13 and by V-ATPase acidification of the lumen. The activity of VMA13 is not required for YND1 inhibition. Functionally, catalyzes the hydrolysis of phosphoanhydride bonds of nucleoside tri- and di-phosphates. Has equal high activity toward ADP/ATP, GDP/GTP, and UDP/UTP and approximately 50% less toward CDP/CTP and thiamine pyrophosphate. Has no activity toward GMP. Required for Golgi glycosylation and cell wall integrity. Together with CDC55, required for adenovirus E4orf4 (early region 4 open reading frame 4) induced toxicity, the apyrase activity is not required for this function. Plays a role in sphingolipid synthesis. The sequence is that of Golgi apyrase (YND1) from Saccharomyces cerevisiae (strain ATCC 204508 / S288c) (Baker's yeast).